We begin with the raw amino-acid sequence, 307 residues long: Thymidylate synthase (307 aa).

Positions 1 to 22 (MLVEGSELQSGAQQPRTEAPQH) are disordered. Residues 7 to 16 (ELQSGAQQPR) are compositionally biased toward polar residues. Arginine 44 provides a ligand contact to dUMP. Serine 108 carries the post-translational modification Phosphoserine. DUMP contacts are provided by residues 169–170 (RR), 189–190 (CH), 209–212 (RSGD), asparagine 220, and 250–252 (HIY). Catalysis depends on cysteine 189, which acts as the Nucleophile. Aspartate 212 is a binding site for (6R)-5,10-methylene-5,6,7,8-tetrahydrofolate. Glycyl lysine isopeptide (Lys-Gly) (interchain with G-Cter in SUMO2) cross-links involve residues lysine 286 and lysine 302. Alanine 306 is a (6R)-5,10-methylene-5,6,7,8-tetrahydrofolate binding site.

It belongs to the thymidylate synthase family. As to quaternary structure, homodimer.

The protein localises to the nucleus. It is found in the cytoplasm. Its subcellular location is the mitochondrion. The protein resides in the mitochondrion matrix. It localises to the mitochondrion inner membrane. The catalysed reaction is dUMP + (6R)-5,10-methylene-5,6,7,8-tetrahydrofolate = 7,8-dihydrofolate + dTMP. It functions in the pathway pyrimidine metabolism; dTTP biosynthesis. In terms of biological role, catalyzes the reductive methylation of 2'-deoxyuridine 5'-monophosphate (dUMP) to thymidine 5'-monophosphate (dTMP), using the cosubstrate, 5,10- methylenetetrahydrofolate (CH2H4folate) as a 1-carbon donor and reductant and contributes to the de novo mitochondrial thymidylate biosynthesis pathway. The chain is Thymidylate synthase (Tyms) from Rattus norvegicus (Rat).